The following is a 160-amino-acid chain: Sulfur-rich protein (160 aa).

2 helical membrane-spanning segments follow: residues 63–83 (ITMI…TFVL) and 92–112 (FLFL…SVFM).

It is found in the membrane. The polypeptide is Sulfur-rich protein (srp) (Chlamydia abortus (strain DSM 27085 / S26/3) (Chlamydophila abortus)).